We begin with the raw amino-acid sequence, 23 residues long: Caerin-4.1 (23 aa).

As to expression, expressed by the skin parotoid and/or rostral glands.

It is found in the secreted. Its function is as follows. Antibacterial peptide, that adopts an alpha helical conformation which can disrupt bacterial membranes. Each caerin displays a different antimicrobial specificity. The sequence is that of Caerin-4.1 from Ranoidea caerulea (Green tree frog).